Here is a 54-residue protein sequence, read N- to C-terminus: Ribulose bisphosphate carboxylase large chain (54 aa).

A propeptide spanning residues 1 to 2 (MS) is cleaved from the precursor. Residue Pro3 is modified to N-acetylproline. N6,N6,N6-trimethyllysine is present on Lys14.

The protein belongs to the RuBisCO large chain family. Type I subfamily. In terms of assembly, heterohexadecamer of 8 large chains and 8 small chains.

The protein localises to the plastid. Its subcellular location is the chloroplast. The catalysed reaction is 2 (2R)-3-phosphoglycerate + 2 H(+) = D-ribulose 1,5-bisphosphate + CO2 + H2O. It catalyses the reaction D-ribulose 1,5-bisphosphate + O2 = 2-phosphoglycolate + (2R)-3-phosphoglycerate + 2 H(+). Functionally, ruBisCO catalyzes two reactions: the carboxylation of D-ribulose 1,5-bisphosphate, the primary event in carbon dioxide fixation, as well as the oxidative fragmentation of the pentose substrate in the photorespiration process. Both reactions occur simultaneously and in competition at the same active site. The protein is Ribulose bisphosphate carboxylase large chain (rbcL) of Ilex ciliospinosa (Sichuan holly).